We begin with the raw amino-acid sequence, 227 residues long: Broad specificity amino-acid racemase RacX (227 aa).

Position 51 to 53 (51 to 53) interacts with substrate; the sequence is DRP. The active-site Proton donor/acceptor is the Cys-82. Substrate contacts are provided by residues 83–85 and Lys-161; that span reads NTA. The active-site Proton donor/acceptor is the Cys-191.

It belongs to the aspartate/glutamate racemases family. Homodimer.

The enzyme catalyses an L-alpha-amino acid = a D-alpha-amino acid. It carries out the reaction (2S,6S)-2,6-diaminopimelate = meso-2,6-diaminopimelate. It catalyses the reaction L-lysine = D-lysine. The catalysed reaction is L-arginine = D-arginine. The enzyme catalyses L-ornithine = D-ornithine. It carries out the reaction L-histidine = D-histidine. It catalyses the reaction L-alanine = D-alanine. The catalysed reaction is L-tyrosine = D-tyrosine. The enzyme catalyses L-phenylalanine = D-phenylalanine. It carries out the reaction L-serine = D-serine. It catalyses the reaction L-glutamine = D-glutamine. The catalysed reaction is L-methionine = D-methionine. The enzyme catalyses L-asparagine = D-asparagine. It carries out the reaction L-homoserine = D-homoserine. In terms of biological role, amino-acid racemase able to utilize a broad range of substrates. Preferentially catalyzes the epimerization of LL-diaminopimelate, as well as the racemization of D-lysine, L-arginine, L-ornithine, L-lysine and D-arginine. Has lower activity against D-ornithine, L-histidine, L-alanine, L-tyrosine, L-phenylalanine, L-serine, L-glutamine, L-methionine, L-asparagine and L-homoserine. Has weak activity against L-norleucine, L-aminobutyric acid and L-norvaline. Has no activity toward nine L-amino acids (Thr, Glu, Asp, Val, Leu, Ile, Trp, Cit and Aad). D-amino acids might be used as components of peptidoglycan and/or be involved in peptidoglycan metabolism and remodeling. This chain is Broad specificity amino-acid racemase RacX (racX), found in Bacillus subtilis (strain 168).